The sequence spans 299 residues: Glycine--tRNA ligase alpha subunit (299 aa).

Belongs to the class-II aminoacyl-tRNA synthetase family. In terms of assembly, tetramer of two alpha and two beta subunits.

The protein localises to the cytoplasm. The enzyme catalyses tRNA(Gly) + glycine + ATP = glycyl-tRNA(Gly) + AMP + diphosphate. The chain is Glycine--tRNA ligase alpha subunit from Laribacter hongkongensis (strain HLHK9).